The following is a 714-amino-acid chain: Forkhead box protein P2 (714 aa).

The segment covering methionine 1–aspartate 28 has biased composition (polar residues). 2 disordered regions span residues methionine 1–serine 45 and aspartate 280–serine 338. A compositionally biased stretch (low complexity) spans threonine 291 to serine 304. Residues serine 314–leucine 323 show a composition bias toward polar residues. Over residues alanine 325–glycine 336 the composition is skewed to basic and acidic residues. The segment at glycine 345–histidine 370 adopts a C2H2-type zinc-finger fold. Positions valine 387–leucine 408 are leucine-zipper. Residues proline 421 to valine 425 form a CTBP1-binding region. Positions threonine 437 to glutamine 458 are enriched in low complexity. The tract at residues threonine 437 to threonine 464 is disordered. The fork-head DNA-binding region spans arginine 503–leucine 593. Disordered stretches follow at residues leucine 648–isoleucine 667 and valine 677–glutamate 714. Residues leucine 698–glutamate 714 show a composition bias toward acidic residues.

As to quaternary structure, forms homodimers and heterodimers with FOXP1 and FOXP4. Dimerization is required for DNA-binding. Interacts with CTBP1. Interacts with FOXP1. Interacts with TBR1. Interacts with ZMYM2. In terms of tissue distribution, highest expression in lung. Lower expression in spleen, skeletal muscle, brain, kidney and small intestine.

Its subcellular location is the nucleus. Functionally, transcriptional repressor that may play a role in the specification and differentiation of lung epithelium. May also play a role in developing neural, gastrointestinal and cardiovascular tissues. Can act with CTBP1 to synergistically repress transcription but CTPBP1 is not essential. Plays a role in synapse formation by regulating SRPX2 levels. This is Forkhead box protein P2 (Foxp2) from Mus musculus (Mouse).